The chain runs to 388 residues: MLVLVINSGSSSLKYQLRELADDGADGPRPVLAKGLVERIGVPGSDVPDHAAALERVEAEVFRVIGDRPIDAAGHRVVHGGERFTAAALVTNEVIRAIERLAPLAPLHNPAAAQGLRAMTERYPDMPQVVVFDTSFHQTMPREAWQYALPESVYREHGIRRYGFHGTSHDLVAGMAARHLGVAREEFSGIVLHLGNGASATAIRDGASVDTSMGFTPLAGLVMGTRTGDLDPSVVTHLMRTQGRSAEEMDTLMNKESGLLGLAGHADMRQVVEAADAGDRRARTALDVASYRLAKYVGGYHVAVGGAQAIVFTAGIGENSAPFRARVVQRLGALGVELDAAANEAGLSGAGDDGVAVISAPGSAIPVLVIPTDEEQAIARLTWELTRG.

N7 contacts Mg(2+). Position 14 (K14) interacts with ATP. Residue R76 participates in substrate binding. The active-site Proton donor/acceptor is D133. ATP is bound by residues 193 to 197, 267 to 269, and 315 to 319; these read HLGNG, DMR, and GIGEN. E374 provides a ligand contact to Mg(2+).

Belongs to the acetokinase family. As to quaternary structure, homodimer. It depends on Mg(2+) as a cofactor. Mn(2+) is required as a cofactor.

It localises to the cytoplasm. It catalyses the reaction acetate + ATP = acetyl phosphate + ADP. It functions in the pathway metabolic intermediate biosynthesis; acetyl-CoA biosynthesis; acetyl-CoA from acetate: step 1/2. In terms of biological role, catalyzes the formation of acetyl phosphate from acetate and ATP. Can also catalyze the reverse reaction. The sequence is that of Acetate kinase from Micrococcus luteus (strain ATCC 4698 / DSM 20030 / JCM 1464 / CCM 169 / CCUG 5858 / IAM 1056 / NBRC 3333 / NCIMB 9278 / NCTC 2665 / VKM Ac-2230) (Micrococcus lysodeikticus).